Reading from the N-terminus, the 941-residue chain is Endoplasmic reticulum aminopeptidase 1 (941 aa).

Position 1 (Met-1) is a topological domain, cytoplasmic. A helical; Signal-anchor for type II membrane protein transmembrane segment spans residues 2–21 (VFLPLKWSLATMSFLLSSLL). Topologically, residues 22–941 (ALLTVSTPSW…WLQSEKLERM (920 aa)) are lumenal. N-linked (GlcNAc...) asparagine glycans are attached at residues Asn-70 and Asn-154. Substrate is bound by residues Glu-183 and 317–321 (GAMEN). Residue His-353 coordinates Zn(2+). Glu-354 acts as the Proton acceptor in catalysis. Residues His-357 and Glu-376 each contribute to the Zn(2+) site. 2 disulfides stabilise this stretch: Cys-404/Cys-443 and Cys-736/Cys-743. Asn-414 carries an N-linked (GlcNAc...) asparagine glycan. Residues Asn-760 and Asn-901 are each glycosylated (N-linked (GlcNAc...) asparagine).

Belongs to the peptidase M1 family. In terms of assembly, monomer. May also exist as a heterodimer; with ERAP2. Interacts with RBMX. The cofactor is Zn(2+). In terms of processing, N-glycosylated. As to expression, ubiquitous.

The protein localises to the endoplasmic reticulum membrane. Functionally, aminopeptidase that plays a central role in peptide trimming, a step required for the generation of most HLA class I-binding peptides. Peptide trimming is essential to customize longer precursor peptides to fit them to the correct length required for presentation on MHC class I molecules. Strongly prefers substrates 9-16 residues long. Rapidly degrades 13-mer to a 9-mer and then stops. Preferentially hydrolyzes the residue Leu and peptides with a hydrophobic C-terminus, while it has weak activity toward peptides with charged C-terminus. May play a role in the inactivation of peptide hormones. May be involved in the regulation of blood pressure through the inactivation of angiotensin II and/or the generation of bradykinin in the kidney. This is Endoplasmic reticulum aminopeptidase 1 (ERAP1) from Homo sapiens (Human).